A 44-amino-acid chain; its full sequence is Unknown protein 1 (44 aa).

This is Unknown protein 1 from Lonomia obliqua (Moth).